A 453-amino-acid polypeptide reads, in one-letter code: Bifunctional protein GlmU (453 aa).

The tract at residues 1–225 is pyrophosphorylase; it reads MNIVILAAGT…EWETLGVNSK (225 aa). Residues 6–9, Lys20, Gln71, 76–77, 98–100, Gly135, Glu150, Asn165, and Asn223 each bind UDP-N-acetyl-alpha-D-glucosamine; these read LAAG, GT, and YGD. Residue Asp100 coordinates Mg(2+). Asn223 provides a ligand contact to Mg(2+). The interval 226 to 246 is linker; sequence QQLAELERIHQRNVADDLLVA. Positions 247–453 are N-acetyltransferase; sequence GVTIADPARI…GYVRPTKKKS (207 aa). UDP-N-acetyl-alpha-D-glucosamine contacts are provided by Arg329 and Lys347. His359 acts as the Proton acceptor in catalysis. Residues Tyr362 and Asn373 each contribute to the UDP-N-acetyl-alpha-D-glucosamine site. Residues Ala376, 382–383, Ser401, and Ala419 contribute to the acetyl-CoA site; that span reads NY.

The protein in the N-terminal section; belongs to the N-acetylglucosamine-1-phosphate uridyltransferase family. This sequence in the C-terminal section; belongs to the transferase hexapeptide repeat family. Homotrimer. Mg(2+) is required as a cofactor.

It is found in the cytoplasm. The enzyme catalyses alpha-D-glucosamine 1-phosphate + acetyl-CoA = N-acetyl-alpha-D-glucosamine 1-phosphate + CoA + H(+). It carries out the reaction N-acetyl-alpha-D-glucosamine 1-phosphate + UTP + H(+) = UDP-N-acetyl-alpha-D-glucosamine + diphosphate. Its pathway is nucleotide-sugar biosynthesis; UDP-N-acetyl-alpha-D-glucosamine biosynthesis; N-acetyl-alpha-D-glucosamine 1-phosphate from alpha-D-glucosamine 6-phosphate (route II): step 2/2. It functions in the pathway nucleotide-sugar biosynthesis; UDP-N-acetyl-alpha-D-glucosamine biosynthesis; UDP-N-acetyl-alpha-D-glucosamine from N-acetyl-alpha-D-glucosamine 1-phosphate: step 1/1. The protein operates within bacterial outer membrane biogenesis; LPS lipid A biosynthesis. Functionally, catalyzes the last two sequential reactions in the de novo biosynthetic pathway for UDP-N-acetylglucosamine (UDP-GlcNAc). The C-terminal domain catalyzes the transfer of acetyl group from acetyl coenzyme A to glucosamine-1-phosphate (GlcN-1-P) to produce N-acetylglucosamine-1-phosphate (GlcNAc-1-P), which is converted into UDP-GlcNAc by the transfer of uridine 5-monophosphate (from uridine 5-triphosphate), a reaction catalyzed by the N-terminal domain. The sequence is that of Bifunctional protein GlmU from Paraburkholderia phymatum (strain DSM 17167 / CIP 108236 / LMG 21445 / STM815) (Burkholderia phymatum).